A 401-amino-acid chain; its full sequence is Lipid-A-disaccharide synthase (401 aa).

Belongs to the LpxB family.

The catalysed reaction is a lipid X + a UDP-2-N,3-O-bis[(3R)-3-hydroxyacyl]-alpha-D-glucosamine = a lipid A disaccharide + UDP + H(+). It participates in bacterial outer membrane biogenesis; LPS lipid A biosynthesis. Its function is as follows. Condensation of UDP-2,3-diacylglucosamine and 2,3-diacylglucosamine-1-phosphate to form lipid A disaccharide, a precursor of lipid A, a phosphorylated glycolipid that anchors the lipopolysaccharide to the outer membrane of the cell. The chain is Lipid-A-disaccharide synthase from Rhodospirillum centenum (strain ATCC 51521 / SW).